Here is a 461-residue protein sequence, read N- to C-terminus: D-phenylhydantoinase (461 aa).

The a divalent metal cation site is built by His59, His61, and Lys151. Lys151 is subject to N6-carboxylysine. Tyr156 serves as a coordination point for substrate. 2 residues coordinate a divalent metal cation: His182 and His239. Substrate is bound at residue Ser286. Asp313 provides a ligand contact to a divalent metal cation. Asn335 provides a ligand contact to substrate.

The protein belongs to the metallo-dependent hydrolases superfamily. Hydantoinase/dihydropyrimidinase family. In terms of assembly, homotetramer. The cofactor is a divalent metal cation. Post-translationally, carboxylation allows a single lysine to coordinate two divalent metal cations.

The enzyme catalyses D-5-phenylhydantoin + H2O = N-carbamoyl-D-phenylglycine + H(+). In terms of biological role, catalyzes the stereospecific hydrolysis of the cyclic amide bond of D-hydantoin derivatives with an aromatic side chains at the 5'-position. Has no activity on dihydropyrimidines. The physiological function is unknown. This is D-phenylhydantoinase from Shigella boydii serotype 4 (strain Sb227).